Here is a 151-residue protein sequence, read N- to C-terminus: Large ribosomal subunit protein bL9 (151 aa).

It belongs to the bacterial ribosomal protein bL9 family.

In terms of biological role, binds to the 23S rRNA. In Mycobacteroides abscessus (strain ATCC 19977 / DSM 44196 / CCUG 20993 / CIP 104536 / JCM 13569 / NCTC 13031 / TMC 1543 / L948) (Mycobacterium abscessus), this protein is Large ribosomal subunit protein bL9.